A 680-amino-acid chain; its full sequence is Dihydroxyacetone phosphate acyltransferase (680 aa).

Ser12 and Ser17 each carry phosphoserine. The short motif at 162-167 (HRSYID) is the HXXXXD motif element. N6-acetyllysine is present on Lys643. Residues 678 to 680 (AKL) carry the Microbody targeting signal motif.

The protein belongs to the GPAT/DAPAT family. In terms of assembly, part of a heterotrimeric complex composed of GNPAT, AGPS and a modified form of GNPAT.

Its subcellular location is the peroxisome membrane. It catalyses the reaction dihydroxyacetone phosphate + an acyl-CoA = a 1-acylglycerone 3-phosphate + CoA. The catalysed reaction is dihydroxyacetone phosphate + hexadecanoyl-CoA = 1-hexadecanoylglycerone 3-phosphate + CoA. It participates in membrane lipid metabolism; glycerophospholipid metabolism. Dihydroxyacetonephosphate acyltransferase catalyzing the first step in the biosynthesis of plasmalogens, a subset of phospholipids that differ from other glycerolipids by having an alkyl chain attached through a vinyl ether linkage at the sn-1 position of the glycerol backbone, and which unique physical properties have an impact on various aspects of cell signaling and membrane biology. The polypeptide is Dihydroxyacetone phosphate acyltransferase (Bos taurus (Bovine)).